Consider the following 379-residue polypeptide: MKAKTLTATLALILLAFAQADYDVASYCQLVQSGTKLPSLDSCQNYYTCVSNGLPTLSSCSSGYVFNKDSQQCVPTGSFNCFFGVANPCQNQDKKFVPSAKQCNEWHYCLAGAIAGTGTCKEGQIFNFAKQSCVYGECSNTGNNILDSPNLSVCQIMPNGIYFGDNKNCSTWHKCSGMEEKKGTCPNGDNFDPTYASCVPSNMPACSRIQNPPSTGVVSGPPSTSPCSLGTVVGDLTSCSVYYKCENATRSNSTIWNTYTCSGQFFDVISKQCTSTNQARTLKGCNRCQFTTGSMYWVNAVDPQCSEYFTCSNGLETKSTASTCGAGNFFNEDLQYCMIGNSTVGQYAQTHGACENYTCNPNTRLCNLVTATNTTSSHR.

An N-terminal signal peptide occupies residues Met-1 to Ala-20. Chitin-binding type-2 domains are found at residues Ala-25–Phe-83 and Ala-86–Asn-143. 2 disulfide bridges follow: Cys-60/Cys-73 and Cys-120/Cys-133. N-linked (GlcNAc...) asparagine glycans are attached at residues Asn-150 and Asn-168. 3 Chitin-binding type-2 domains span residues Leu-151 to Arg-208, Thr-224 to Lys-283, and Cys-285 to Asn-356. Cys-185 and Cys-198 form a disulfide bridge. N-linked (GlcNAc...) asparagine glycans are attached at residues Asn-247 and Asn-252. Cys-324 and Cys-337 are joined by a disulfide. Residues Asn-341, Asn-356, and Asn-373 are each glycosylated (N-linked (GlcNAc...) asparagine).

In terms of processing, glycosylated. In terms of tissue distribution, larval peritrophic membrane.

Functionally, binds chitin and may bind related oligosaccharide structures. In Chrysomya bezziana (Old world screw-worm fly), this protein is Peritrophin-48.